The sequence spans 2184 residues: Genome polyprotein (2184 aa).

Gly-2 is lipidated: N-myristoyl glycine; by host. The Cytoplasmic segment spans residues 2–1494 (GAQVSTQKTG…HVSRAFICLQ (1493 aa)). Residues 566 to 582 (FYQSPVEGAIERAIARV) are amphipathic alpha-helix. Residues His-871 and Asp-889 each act as for protease 2A activity in the active site. Cys-906 and Cys-908 together coordinate Zn(2+). Catalysis depends on Cys-960, which acts as the For protease 2A activity. Positions 966 and 968 each coordinate Zn(2+). The membrane-binding stretch occupies residues 1100 to 1172 (SNGWLKKFTE…EQSAPSQSDQ (73 aa)). The interval 1100–1238 (SNGWLKKFTE…SPGAGKSVAT (139 aa)) is oligomerization. The interval 1121–1125 (AIKIQ) is RNA-binding. Residues 1204–1360 (EKKMSNYIQF…SMYSQNGKIN (157 aa)) enclose the SF3 helicase domain. Zn(2+) is bound by residues Cys-1368, Cys-1380, and Cys-1385. Residues 1368 to 1385 (CDEECCPVNFKKCCPLVC) form a C4-type; degenerate zinc finger. The interval 1412–1419 (EYNHRHSV) is RNA-binding. The interval 1423–1428 (LEALFQ) is oligomerization. An intramembrane segment occupies 1495–1510 (ALTTFVSVAGIIYIIY). Residues 1511-2184 (KLFAGFQGAY…TLRRKWLDSF (674 aa)) lie on the Cytoplasmic side of the membrane. The residue at position 1520 (Tyr-1520) is an O-(5'-phospho-RNA)-tyrosine. The region spanning 1540-1718 (GPAFEFAVAM…FSAALLKHYF (179 aa)) is the Peptidase C3 domain. Active-site for protease 3C activity residues include His-1579, Glu-1610, and Cys-1686. The RdRp catalytic domain occupies 1949 to 2065 (GHLIAFDYSG…SYPWPIDASL (117 aa)). Mg(2+) is bound by residues Asp-1955 and Asp-2051.

The protein belongs to the picornaviruses polyprotein family. As to quaternary structure, interacts with capsid protein VP1 and capsid protein VP3 to form heterotrimeric protomers. In terms of assembly, interacts with capsid protein VP0, and capsid protein VP3 to form heterotrimeric protomers. Five protomers subsequently associate to form pentamers which serve as building blocks for the capsid. Interacts with capsid protein VP2, capsid protein VP3 and capsid protein VP4 following cleavage of capsid protein VP0. Interacts with host CXADR. Interacts with capsid protein VP1 and capsid protein VP3 in the mature capsid. As to quaternary structure, interacts with capsid protein VP0 and capsid protein VP1 to form heterotrimeric protomers. Five protomers subsequently associate to form pentamers which serve as building blocks for the capsid. Interacts with capsid protein VP4 in the mature capsid. Interacts with protein 2C; this interaction may be important for virion morphogenesis. In terms of assembly, interacts with capsid protein VP1 and capsid protein VP3. Homodimer. As to quaternary structure, homohexamer; forms a hexameric ring structure with 6-fold symmetry characteristic of AAA+ ATPases. Interacts (via N-terminus) with host RTN3 (via reticulon domain); this interaction is important for viral replication. Interacts with capsid protein VP3; this interaction may be important for virion morphogenesis. In terms of assembly, interacts with protein 3CD. Homodimer. Interacts with host GBF1. Interacts (via GOLD domain) with host ACBD3 (via GOLD domain); this interaction allows the formation of a viral protein 3A/ACBD3 heterotetramer with a 2:2 stoichiometry, which will stimulate the recruitment of host PI4KB in order to synthesize PI4P at the viral RNA replication sites. As to quaternary structure, interacts with RNA-directed RNA polymerase. In terms of assembly, interacts with protein 3AB and with RNA-directed RNA polymerase. Interacts with Viral protein genome-linked and with protein 3CD. It depends on Mg(2+) as a cofactor. Post-translationally, specific enzymatic cleavages in vivo by the viral proteases yield processing intermediates and the mature proteins. Myristoylation is required for the formation of pentamers during virus assembly. Further assembly of 12 pentamers and a molecule of genomic RNA generates the provirion. In terms of processing, during virion maturation, immature virions are rendered infectious following cleavage of VP0 into VP4 and VP2. This maturation seems to be an autocatalytic event triggered by the presence of RNA in the capsid and it is followed by a conformational change infectious virion. Post-translationally, myristoylation is required during RNA encapsidation and formation of the mature virus particle. VPg is uridylylated by the polymerase into VPg-pUpU. This acts as a nucleotide-peptide primer for the genomic RNA replication.

Its subcellular location is the virion. The protein localises to the host cytoplasm. It localises to the host cytoplasmic vesicle membrane. It is found in the host nucleus. It carries out the reaction a ribonucleoside 5'-triphosphate + H2O = a ribonucleoside 5'-diphosphate + phosphate + H(+). The enzyme catalyses Selective cleavage of Tyr-|-Gly bond in the picornavirus polyprotein.. It catalyses the reaction RNA(n) + a ribonucleoside 5'-triphosphate = RNA(n+1) + diphosphate. The catalysed reaction is Selective cleavage of Gln-|-Gly bond in the poliovirus polyprotein. In other picornavirus reactions Glu may be substituted for Gln, and Ser or Thr for Gly.. With respect to regulation, replication or transcription is subject to high level of random mutations by the nucleotide analog ribavirin. In terms of biological role, forms an icosahedral capsid of pseudo T=3 symmetry with capsid proteins VP2 and VP3. The capsid is 300 Angstroms in diameter, composed of 60 copies of each capsid protein and enclosing the viral positive strand RNA genome. Capsid protein VP1 mainly forms the vertices of the capsid. Capsid protein VP1 interacts with host CXADR to provide virion attachment to target host cells. This attachment induces virion internalization. Tyrosine kinases are probably involved in the entry process. After binding to its receptor, the capsid undergoes conformational changes. Capsid protein VP1 N-terminus (that contains an amphipathic alpha-helix) and capsid protein VP4 are externalized. Together, they shape a pore in the host membrane through which viral genome is translocated to host cell cytoplasm. Its function is as follows. Forms an icosahedral capsid of pseudo T=3 symmetry with capsid proteins VP2 and VP3. The capsid is 300 Angstroms in diameter, composed of 60 copies of each capsid protein and enclosing the viral positive strand RNA genome. Functionally, lies on the inner surface of the capsid shell. After binding to the host receptor, the capsid undergoes conformational changes. Capsid protein VP4 is released, Capsid protein VP1 N-terminus is externalized, and together, they shape a pore in the host membrane through which the viral genome is translocated into the host cell cytoplasm. Component of immature procapsids, which is cleaved into capsid proteins VP4 and VP2 after maturation. Allows the capsid to remain inactive before the maturation step. In terms of biological role, cysteine protease that cleaves viral polyprotein and specific host proteins. It is responsible for the autocatalytic cleavage between the P1 and P2 regions, which is the first cleavage occurring in the polyprotein. Also cleaves the host translation initiation factor EIF4G1, in order to shut down the capped cellular mRNA translation. Inhibits the host nucleus-cytoplasm protein and RNA trafficking by cleaving host members of the nuclear pores. Counteracts stress granule formation probably by antagonizing its assembly or promoting its dissassembly. Cleaves and inhibits host IFIH1/MDA5, thereby inhibiting the type-I IFN production and the establishment of the antiviral state. Cleaves and inhibits host MAVS, thereby inhibiting the type-I IFN production and the establishment of the antiviral state. Its function is as follows. Plays an essential role in the virus replication cycle by acting as a viroporin. Creates a pore in the host endoplasmic reticulum and as a consequence releases Ca2+ in the cytoplasm of infected cell. In turn, high levels of cytoplasmic calcium may trigger membrane trafficking and transport of viral ER-associated proteins to viroplasms, sites of viral genome replication. Functionally, induces and associates with structural rearrangements of intracellular membranes. Displays RNA-binding, nucleotide binding and NTPase activities. May play a role in virion morphogenesis and viral RNA encapsidation by interacting with the capsid protein VP3. Localizes the viral replication complex to the surface of membranous vesicles. Together with protein 3CD binds the Cis-Active RNA Element (CRE) which is involved in RNA synthesis initiation. Acts as a cofactor to stimulate the activity of 3D polymerase, maybe through a nucleid acid chaperone activity. In terms of biological role, localizes the viral replication complex to the surface of membranous vesicles. It inhibits host cell endoplasmic reticulum-to-Golgi apparatus transport and causes the disassembly of the Golgi complex, possibly through GBF1 interaction. This would result in depletion of MHC, trail receptors and IFN receptors at the host cell surface. Plays an essential role in viral RNA replication by recruiting ACBD3 and PI4KB at the viral replication sites, thereby allowing the formation of the rearranged membranous structures where viral replication takes place. Its function is as follows. Acts as a primer for viral RNA replication and remains covalently bound to viral genomic RNA. VPg is uridylylated prior to priming replication into VPg-pUpU. The oriI viral genomic sequence may act as a template for this. The VPg-pUpU is then used as primer on the genomic RNA poly(A) by the RNA-dependent RNA polymerase to replicate the viral genome. During genome replication, the VPg-RNA linkage is removed by the host TDP2, thereby accelerating replication. During the late stage of the replication cycle, host TDP2 is excluded from sites of viral RNA synthesis and encapsidation, allowing for the generation of progeny virions. Functionally, involved in the viral replication complex and viral polypeptide maturation. It exhibits protease activity with a specificity and catalytic efficiency that is different from protease 3C. Protein 3CD lacks polymerase activity. Protein 3CD binds to the 5'UTR of the viral genome. Replicates the viral genomic RNA on the surface of intracellular membranes. May form linear arrays of subunits that propagate along a strong head-to-tail interaction called interface-I. Covalently attaches UMP to a tyrosine of VPg, which is used to prime RNA synthesis. The positive stranded RNA genome is first replicated at virus induced membranous vesicles, creating a dsRNA genomic replication form. This dsRNA is then used as template to synthesize positive stranded RNA genomes. ss(+)RNA genomes are either translated, replicated or encapsidated. In terms of biological role, major viral protease that mediates proteolytic processing of the polyprotein. Cleaves host EIF5B, contributing to host translation shutoff. Also cleaves host PABPC1, contributing to host translation shutoff. Cleaves host NLRP1, triggers host N-glycine-mediated degradation of the autoinhibitory NLRP1 N-terminal fragment. This is Genome polyprotein from Coxsackievirus B6 (strain Schmitt).